The chain runs to 186 residues: Lipid A acyltransferase PagP (186 aa).

The first 25 residues, 1-25, serve as a signal peptide directing secretion; that stretch reads MNVSKYVAIFSFVFIQLISVGKVFA. Active-site residues include His-58, Asp-101, and Ser-102.

Belongs to the lipid A palmitoyltransferase family. In terms of assembly, homodimer.

It localises to the cell outer membrane. It carries out the reaction a lipid A + a 1,2-diacyl-sn-glycero-3-phosphocholine = a hepta-acyl lipid A + a 2-acyl-sn-glycero-3-phosphocholine. It catalyses the reaction a lipid IVA + a 1,2-diacyl-sn-glycero-3-phosphocholine = a lipid IVB + a 2-acyl-sn-glycero-3-phosphocholine. The catalysed reaction is a lipid IIA + a 1,2-diacyl-sn-glycero-3-phosphocholine = a lipid IIB + a 2-acyl-sn-glycero-3-phosphocholine. Transfers a fatty acid residue from the sn-1 position of a phospholipid to the N-linked hydroxyfatty acid chain on the proximal unit of lipid A or its precursors. In Shigella boydii serotype 4 (strain Sb227), this protein is Lipid A acyltransferase PagP.